The chain runs to 421 residues: RNA exonuclease 4 (421 aa).

Disordered regions lie at residues 1–51 (MAKA…ETKK) and 79–179 (ENQA…QPPK). Residues 11-24 (SPCSGSLGKTANTP) are compositionally biased toward polar residues. Residues 25 to 36 (KQKRKQKQRKFW) are compositionally biased toward basic residues. Basic and acidic residues-rich tracts occupy residues 92-107 (PKKD…EESV), 140-149 (AAEKSDEVSK), and 161-170 (DTEHQGKKPQ). In terms of domain architecture, Exonuclease spans 234-385 (TVAMDCEMVG…QDAQAAMRLY (152 aa)).

The protein belongs to the REXO4 family.

It is found in the nucleus. The chain is RNA exonuclease 4 (rexo4) from Xenopus laevis (African clawed frog).